Reading from the N-terminus, the 215-residue chain is Probable transaldolase (215 aa).

Lys-83 serves as the catalytic Schiff-base intermediate with substrate.

This sequence belongs to the transaldolase family. Type 3B subfamily.

The protein resides in the cytoplasm. It catalyses the reaction D-sedoheptulose 7-phosphate + D-glyceraldehyde 3-phosphate = D-erythrose 4-phosphate + beta-D-fructose 6-phosphate. The protein operates within carbohydrate degradation; pentose phosphate pathway; D-glyceraldehyde 3-phosphate and beta-D-fructose 6-phosphate from D-ribose 5-phosphate and D-xylulose 5-phosphate (non-oxidative stage): step 2/3. Functionally, transaldolase is important for the balance of metabolites in the pentose-phosphate pathway. The protein is Probable transaldolase of Methanococcus vannielii (strain ATCC 35089 / DSM 1224 / JCM 13029 / OCM 148 / SB).